A 451-amino-acid polypeptide reads, in one-letter code: MGNLFKFSLNCIKYRSENLEKSKMFYQYFYFHLTLSIVLIYGSDIGKDANEHMSSVPKKIIIEGTRQKRQVVTKLFSPQWSNAKVFYCNADSFSKLQLKKLKLKKNSDTVKRKLMKFAMNFISSQTCVTFEENCTISTRIKFVDSTFCASYVGMINSVQEIYFPDWCMRFGSAVHELMHALGVLHTHARFDRDNFLNVNLNKDDEDDSNFEIVSPPFSINVVPYEYGSTLHYTADVSGTNSLLPKQMEYYRTLGNRRVTFYDMLTINTAYNCKCPSELLCANGGYTNPSNCLECICPLGYGGVLCDRVVACSVQLSADSYWKGSWISVGSSVLRDTTDPVKAFISINAPKDKIIEVKIVKIENFSCDSGCNNNGVEIKYMGDPRITNPIICCENQVDPSNKGYKAKLNPLLINIYTFLGKNKVTFHYRYVNERLSSYNKTTNGYDNYEYYA.

The 204-residue stretch at 70–273 (QVVTKLFSPQ…LTINTAYNCK (204 aa)) folds into the Peptidase M12A domain. 4 disulfide bridges follow: Cys-127–Cys-272, Cys-148–Cys-167, Cys-274–Cys-291, and Cys-296–Cys-305. Asn-133 carries an N-linked (GlcNAc...) asparagine glycan. Position 175 (His-175) interacts with Zn(2+). The active site involves Glu-176. His-179 and His-185 together coordinate Zn(2+). The EGF-like domain occupies 267-306 (NTAYNCKCPSELLCANGGYTNPSNCLECICPLGYGGVLCD). Asn-363 and Asn-438 each carry an N-linked (GlcNAc...) asparagine glycan.

The cofactor is Zn(2+).

The protein localises to the secreted. Metalloprotease. The polypeptide is Zinc metalloproteinase nas-16 (nas-16) (Caenorhabditis elegans).